The chain runs to 307 residues: Histone deacetylase HDT1 (307 aa).

Positions 98–112 (EDEMDLDSEDEDEEL) are enriched in acidic residues. A disordered region spans residues 98–280 (EDEMDLDSED…KSGGSVPCKP (183 aa)). The span at 119–132 (ENGKADEKKQKSQE) shows a compositional bias: basic and acidic residues. Residues 151–197 (DDDSDEDETDDSDEDETDDSDEGLSSEEGDDDSSDEDDTSDDEEEDT) are compositionally biased toward acidic residues. Residues 198–211 (PTPKKPEVGKKRPA) show a composition bias toward basic and acidic residues. Residues 265-277 (SPKSAPKSGGSVP) show a composition bias toward low complexity. The segment at 276 to 299 (VPCKPCSKSFISETALQAHSRAKM) adopts a C2H2-type; degenerate zinc-finger fold.

The protein belongs to the histone deacetylase HD2 family. Multimer. Isolated as a trimer composed of 3 proteins of 39, 42 and 45 kDa, possibly a homotrimer with different phosphorylation status or a heterotrimer with HDT2 and/or HDT3. In terms of processing, the N-terminus is blocked. Phosphorylated. Required for enzyme activity.

The protein localises to the nucleus. Its subcellular location is the nucleolus. Inhibited by 3-(4-Aroyl-1-methyl-1H-pyrrol-2-yl)-N-hydroxy-2-propenamides. 3-(1-methyl-4-phenylacetyl-1H-pyrrol-2-yl)-N-hydroxy-2-propenamide 1b and 3-[1-methyl-4-(3-phenyl-2-propenoyl)-1H-pyrrol-2-yl]-N-hydroxy-2-propenamide 1c are very potent inhibitors. Functionally, mediates the deacetylation of lysine residues on the N-terminal part of the core histones (H2A, H2B, H3 and H4). Histone deacetylation gives a tag for epigenetic repression and plays an important role in transcriptional regulation, cell cycle progression and developmental events. Able to deacetylate all 4 core histones. In Zea mays (Maize), this protein is Histone deacetylase HDT1 (HDT1).